Here is a 175-residue protein sequence, read N- to C-terminus: Ribosome maturation factor RimM (175 aa).

The 74-residue stretch at 99-172 folds into the PRC barrel domain; the sequence is EGEFHLLDLV…WLRLTPPPGL (74 aa).

This sequence belongs to the RimM family. As to quaternary structure, binds ribosomal protein uS19.

It is found in the cytoplasm. Functionally, an accessory protein needed during the final step in the assembly of 30S ribosomal subunit, possibly for assembly of the head region. Essential for efficient processing of 16S rRNA. May be needed both before and after RbfA during the maturation of 16S rRNA. It has affinity for free ribosomal 30S subunits but not for 70S ribosomes. The chain is Ribosome maturation factor RimM from Synechococcus sp. (strain WH7803).